Consider the following 286-residue polypeptide: Bifunctional protein FolD 2 (286 aa).

NADP(+) is bound by residues 165 to 167 (GRG), T192, and V233.

The protein belongs to the tetrahydrofolate dehydrogenase/cyclohydrolase family. Homodimer.

The catalysed reaction is (6R)-5,10-methylene-5,6,7,8-tetrahydrofolate + NADP(+) = (6R)-5,10-methenyltetrahydrofolate + NADPH. The enzyme catalyses (6R)-5,10-methenyltetrahydrofolate + H2O = (6R)-10-formyltetrahydrofolate + H(+). Its pathway is one-carbon metabolism; tetrahydrofolate interconversion. Its function is as follows. Catalyzes the oxidation of 5,10-methylenetetrahydrofolate to 5,10-methenyltetrahydrofolate and then the hydrolysis of 5,10-methenyltetrahydrofolate to 10-formyltetrahydrofolate. The chain is Bifunctional protein FolD 2 from Rhodococcus jostii (strain RHA1).